A 94-amino-acid polypeptide reads, in one-letter code: Progonadoliberin-3 (94 aa).

The first 23 residues, 1 to 23, serve as a signal peptide directing secretion; sequence MEWKGRVLVQLLMLVCVLEVSLC. At Gln-24 the chain carries Pyrrolidone carboxylic acid. A Glycine amide modification is found at Gly-33.

The protein belongs to the GnRH family.

The protein resides in the secreted. In terms of biological role, stimulates the secretion of gonadotropins. The chain is Progonadoliberin-3 (gnrh3) from Rutilus rutilus (Roach).